The sequence spans 364 residues: Alanine racemase (364 aa).

K39 acts as the Proton acceptor; specific for D-alanine in catalysis. K39 bears the N6-(pyridoxal phosphate)lysine mark. R137 serves as a coordination point for substrate. Catalysis depends on Y258, which acts as the Proton acceptor; specific for L-alanine. Position 306 (M306) interacts with substrate.

It belongs to the alanine racemase family. Pyridoxal 5'-phosphate is required as a cofactor.

It carries out the reaction L-alanine = D-alanine. It participates in amino-acid biosynthesis; D-alanine biosynthesis; D-alanine from L-alanine: step 1/1. Functionally, catalyzes the interconversion of L-alanine and D-alanine. May also act on other amino acids. The sequence is that of Alanine racemase (alr) from Methylobacterium sp. (strain 4-46).